Here is a 38-residue protein sequence, read N- to C-terminus: Spheniscin-2 (38 aa).

3 disulfide bridges follow: C5–C33, C12–C27, and C17–C34.

Monomer. Secreted into the stomach cavity.

The protein resides in the secreted. Its function is as follows. Has antifungal activity and antibacterial activity against Gram-positive and Gram-negative bacteria. Involved in the process of food preservation in the stomach during the incubation fast. May also be present during infection. The sequence is that of Spheniscin-2 from Aptenodytes patagonicus (King penguin).